An 86-amino-acid chain; its full sequence is Small ribosomal subunit protein bS16 (86 aa).

Belongs to the bacterial ribosomal protein bS16 family.

The protein is Small ribosomal subunit protein bS16 of Myxococcus xanthus (strain DK1622).